A 197-amino-acid polypeptide reads, in one-letter code: MYEYIKGKYIDMYKDYIVIENNNIGYKIYTSGSTMAKLPSIGENIMLYTEQIVREDFIGVYGFLTKDELSMFKLLLTINGVGAKAALSLLSISNVSTLKYAIKMGDEKTITRAPGIGKKTAQRIILELKDKIEIDILEEDDEQTINKVTDDKKVLEAVAALITLGYSEKEANKVINSCDKNNSLEQIIKEALKYLMK.

The tract at residues 1 to 64 (MYEYIKGKYI…EDFIGVYGFL (64 aa)) is domain I. The interval 65-143 (TKDELSMFKL…IDILEEDDEQ (79 aa)) is domain II. A flexible linker region spans residues 144-148 (TINKV). A domain III region spans residues 149–197 (TDDKKVLEAVAALITLGYSEKEANKVINSCDKNNSLEQIIKEALKYLMK).

The protein belongs to the RuvA family. As to quaternary structure, homotetramer. Forms an RuvA(8)-RuvB(12)-Holliday junction (HJ) complex. HJ DNA is sandwiched between 2 RuvA tetramers; dsDNA enters through RuvA and exits via RuvB. An RuvB hexamer assembles on each DNA strand where it exits the tetramer. Each RuvB hexamer is contacted by two RuvA subunits (via domain III) on 2 adjacent RuvB subunits; this complex drives branch migration. In the full resolvosome a probable DNA-RuvA(4)-RuvB(12)-RuvC(2) complex forms which resolves the HJ.

It is found in the cytoplasm. In terms of biological role, the RuvA-RuvB-RuvC complex processes Holliday junction (HJ) DNA during genetic recombination and DNA repair, while the RuvA-RuvB complex plays an important role in the rescue of blocked DNA replication forks via replication fork reversal (RFR). RuvA specifically binds to HJ cruciform DNA, conferring on it an open structure. The RuvB hexamer acts as an ATP-dependent pump, pulling dsDNA into and through the RuvAB complex. HJ branch migration allows RuvC to scan DNA until it finds its consensus sequence, where it cleaves and resolves the cruciform DNA. The sequence is that of Holliday junction branch migration complex subunit RuvA from Clostridium botulinum (strain 657 / Type Ba4).